The following is a 158-amino-acid chain: Non-specific lipid transfer protein GPI-anchored 29 (158 aa).

A signal peptide spans 1–24 (MAYFSTATSLLLLVLSVSSPYVHG). Intrachain disulfides connect cysteine 28–cysteine 71, cysteine 38–cysteine 55, cysteine 56–cysteine 95, and cysteine 69–cysteine 105. Asparagine 84 is a glycosylation site (N-linked (GlcNAc...) asparagine). Residue serine 134 is the site of GPI-anchor amidated serine attachment. Positions 135–158 (KGNSLIPISGFSFVIVTALAMFRI) are cleaved as a propeptide — removed in mature form.

Belongs to the plant LTP family. In terms of tissue distribution, confined to the ovaries of the inflorescence.

Its subcellular location is the secreted. The protein localises to the cell membrane. Functionally, probable lipid transfer protein. The sequence is that of Non-specific lipid transfer protein GPI-anchored 29 from Arabidopsis thaliana (Mouse-ear cress).